The chain runs to 354 residues: UDP-3-O-acylglucosamine N-acyltransferase (354 aa).

The active-site Proton acceptor is H257. Positions 335 to 354 (AQQVSKSKLRGRNPGGKQND) are disordered.

It belongs to the transferase hexapeptide repeat family. LpxD subfamily. As to quaternary structure, homotrimer.

The catalysed reaction is a UDP-3-O-[(3R)-3-hydroxyacyl]-alpha-D-glucosamine + a (3R)-hydroxyacyl-[ACP] = a UDP-2-N,3-O-bis[(3R)-3-hydroxyacyl]-alpha-D-glucosamine + holo-[ACP] + H(+). Its pathway is bacterial outer membrane biogenesis; LPS lipid A biosynthesis. Its function is as follows. Catalyzes the N-acylation of UDP-3-O-acylglucosamine using 3-hydroxyacyl-ACP as the acyl donor. Is involved in the biosynthesis of lipid A, a phosphorylated glycolipid that anchors the lipopolysaccharide to the outer membrane of the cell. This Rhizobium etli (strain ATCC 51251 / DSM 11541 / JCM 21823 / NBRC 15573 / CFN 42) protein is UDP-3-O-acylglucosamine N-acyltransferase.